The following is a 413-amino-acid chain: MPLLVCGINHQSAPLTVREKLVFTPERTPLALQSLLAEKAVNEALLLSTCNRTEIYTTVDEAATILRWLSKQPQLSGIDLRSFCYARRDIEMVRHVMRVGSGLDSMVLGEPQILGQMKQAYLLARRIGAVGSELGRLFPAVFAATKRIRSETAIGANPVSIAYAVVQLAKRIFSHLNQCQILLIGAGETIELVFSHLYNQGARHFFIANRTLTRAKQIAEPYHAQAIRLSDIPTYLPKVDIVISATMSQLPLVGKGAVESALRQRKRRPLFMADLALPRDIEPETAQLEDVYLYNIDDLQTLIAQNRQTREAAAKQAEAMVEMQAIHYMRQLQVHKAGDTIRRFRERVEMLRDQELEKALAHFQRTNDPKAVIAHFAHNLTNKILHQPTTKLRQAAYEDQVQLLLSAKELFDL.

Residues 49 to 52 (TCNR), Ser-105, 110 to 112 (EPQ), and Gln-116 each bind substrate. The Nucleophile role is filled by Cys-50. An NADP(+)-binding site is contributed by 185–190 (GAGETI).

Belongs to the glutamyl-tRNA reductase family. As to quaternary structure, homodimer.

It catalyses the reaction (S)-4-amino-5-oxopentanoate + tRNA(Glu) + NADP(+) = L-glutamyl-tRNA(Glu) + NADPH + H(+). It participates in porphyrin-containing compound metabolism; protoporphyrin-IX biosynthesis; 5-aminolevulinate from L-glutamyl-tRNA(Glu): step 1/2. Functionally, catalyzes the NADPH-dependent reduction of glutamyl-tRNA(Glu) to glutamate 1-semialdehyde (GSA). This is Glutamyl-tRNA reductase from Coxiella burnetii (strain Dugway 5J108-111).